A 262-amino-acid polypeptide reads, in one-letter code: Ribosomal RNA small subunit methyltransferase A (262 aa).

S-adenosyl-L-methionine-binding residues include N13, L15, G40, E61, D85, and N104.

This sequence belongs to the class I-like SAM-binding methyltransferase superfamily. rRNA adenine N(6)-methyltransferase family. RsmA subfamily.

The protein resides in the cytoplasm. The enzyme catalyses adenosine(1518)/adenosine(1519) in 16S rRNA + 4 S-adenosyl-L-methionine = N(6)-dimethyladenosine(1518)/N(6)-dimethyladenosine(1519) in 16S rRNA + 4 S-adenosyl-L-homocysteine + 4 H(+). Specifically dimethylates two adjacent adenosines (A1518 and A1519) in the loop of a conserved hairpin near the 3'-end of 16S rRNA in the 30S particle. May play a critical role in biogenesis of 30S subunits. The protein is Ribosomal RNA small subunit methyltransferase A of Chromobacterium violaceum (strain ATCC 12472 / DSM 30191 / JCM 1249 / CCUG 213 / NBRC 12614 / NCIMB 9131 / NCTC 9757 / MK).